Here is a 345-residue protein sequence, read N- to C-terminus: MADRRRTDDNKGAREVVLLLNIGSPDSPEVKDVARYLNSFLTDRRIITLPFLLRQLLVRGIITPFRKKSSAQKYRTVWDESTRSFPLISHTKAIARALAHTGRDVHVAMRYGKPTVADVLKELPHGRSLVVLPLFPHYAMSSYETAVEHCKAEIRRLCPNLSFRVVQPFYAHEAYIRVLADNIRPYLTKPFDKLILSYHGIPRDHLDKTTRQALDLRHPEGCCTEEDPTANVCYRYQTYRTTALIREALCLAEEQVEQVFQSRVGHTEWLRPYLIERLSAWPQEETKRILIACPSFVCDCLESLEEVADHGQSIFKKAGGADFTYIPCLNSGANWIDALRNILEE.

Fe cation contacts are provided by His199 and Glu302.

Belongs to the ferrochelatase family.

The protein resides in the cytoplasm. It carries out the reaction heme b + 2 H(+) = protoporphyrin IX + Fe(2+). The protein operates within porphyrin-containing compound metabolism; protoheme biosynthesis; protoheme from protoporphyrin-IX: step 1/1. Functionally, catalyzes the ferrous insertion into protoporphyrin IX. The polypeptide is Ferrochelatase (Porphyromonas gingivalis (strain ATCC 33277 / DSM 20709 / CIP 103683 / JCM 12257 / NCTC 11834 / 2561)).